A 372-amino-acid polypeptide reads, in one-letter code: Putative glutamate--cysteine ligase 2 (372 aa).

The protein belongs to the glutamate--cysteine ligase type 2 family. YbdK subfamily. Homodimer.

It catalyses the reaction L-cysteine + L-glutamate + ATP = gamma-L-glutamyl-L-cysteine + ADP + phosphate + H(+). Its function is as follows. ATP-dependent carboxylate-amine ligase which exhibits weak glutamate--cysteine ligase activity. The sequence is that of Putative glutamate--cysteine ligase 2 (ybdK) from Escherichia coli O8 (strain IAI1).